Reading from the N-terminus, the 230-residue chain is 2,3-bisphosphoglycerate-dependent phosphoglycerate mutase (230 aa).

Substrate-binding positions include 10 to 17, 23 to 24, Arg62, 89 to 92, Lys100, 116 to 117, and 185 to 186; these read RHGQSKWN, TG, ERHY, RR, and GN. His11 acts as the Tele-phosphohistidine intermediate in catalysis. Glu89 serves as the catalytic Proton donor/acceptor.

It belongs to the phosphoglycerate mutase family. BPG-dependent PGAM subfamily. In terms of assembly, homodimer.

It catalyses the reaction (2R)-2-phosphoglycerate = (2R)-3-phosphoglycerate. It participates in carbohydrate degradation; glycolysis; pyruvate from D-glyceraldehyde 3-phosphate: step 3/5. Its function is as follows. Catalyzes the interconversion of 2-phosphoglycerate and 3-phosphoglycerate. The chain is 2,3-bisphosphoglycerate-dependent phosphoglycerate mutase from Buchnera aphidicola subsp. Schizaphis graminum (strain Sg).